We begin with the raw amino-acid sequence, 484 residues long: Crt homolog 2 (484 aa).

The Cytoplasmic segment spans residues 1 to 57; the sequence is MSEEKLPLLSPLNENDIENDYKDENLKSDLDKLSNVKKQSIIQRFKDYLKNSISKQT. The helical transmembrane segment at 58 to 78 threads the bilayer; sequence ATVLVYVVLYILSGVINSLLL. Residues 79–94 lie on the Vacuolar side of the membrane; sequence KKVMNVFTNYGFFLNQ. Residues 95–115 traverse the membrane as a helical segment; the sequence is LTNYGYVPIFGAIVLYKILFT. Topologically, residues 116 to 128 are cytoplasmic; the sequence is NDIPKDTRSFPQW. Residues 129–149 traverse the membrane as a helical segment; sequence KFVIMGALDAVTGYFVVIGGI. The Vacuolar portion of the chain corresponds to 150–154; the sequence is KTTGP. Residues 155-175 form a helical membrane-spanning segment; it reads LQQLLNQSVIPFTMLLSFIFL. Residues 176–178 are Cytoplasmic-facing; it reads KER. Residues 179–199 form a helical membrane-spanning segment; it reads YSLIQLGGALIIIGGVVVSLI. Topologically, residues 200–210 are vacuolar; the sequence is PSLTGGNTSGN. N206 carries N-linked (GlcNAc...) asparagine glycosylation. The chain crosses the membrane as a helical span at residues 211–231; that stretch reads MLFYNFFYLISMIPYAFSNVY. The Cytoplasmic segment spans residues 232 to 244; that stretch reads KAIGFSTVEDMDV. Residues 245–265 traverse the membrane as a helical segment; that stretch reads WYLQYFDALYQSLVGTVLFPI. Residues 266–328 are Vacuolar-facing; sequence NNWLPPPSDM…LGCDNCHGAW (63 aa). The N-linked (GlcNAc...) asparagine glycan is linked to N302. Residues 329 to 349 form a helical membrane-spanning segment; sequence VVVLIYMAVNVLYNVFILLVL. Residues 350–355 lie on the Cytoplasmic side of the membrane; sequence KHAGAT. A helical membrane pass occupies residues 356 to 378; that stretch reads VFSIANTLRLPLTNIAFSFKFIM. At 379–382 the chain is on the vacuolar side; it reads GSDS. A helical membrane pass occupies residues 383–403; it reads NPFSGLSVAGLCIILLGLGGY. The Cytoplasmic portion of the chain corresponds to 404–484; it reads RVGSMIKQKK…RNQNSIYGDQ (81 aa).

This sequence belongs to the CRT-like transporter family.

The protein localises to the vacuole membrane. Its function is as follows. Nutrient transporter. Involved in maintaining the osmotic homeostasis of the digestive vacuole. This Dictyostelium discoideum (Social amoeba) protein is Crt homolog 2 (crtp2).